Here is a 314-residue protein sequence, read N- to C-terminus: Coiled-coil domain-containing protein 92 (314 aa).

Coiled-coil stretches lie at residues 1 to 27 (MAAT…HAST) and 59 to 113 (DSSS…EKKY). Disordered stretches follow at residues 153–193 (LSSS…KKSL) and 251–314 (ASDR…DRTV). The span at 176 to 186 (PPKDKLPETPR) shows a compositional bias: basic and acidic residues. A Phosphoserine modification is found at S192. Residues 266-280 (KPHKTHVGVAHRIHH) show a composition bias toward basic residues.

As to quaternary structure, interacts with CEP164. Post-translationally, phosphorylated at Ser-192 by TTBK2.

Its subcellular location is the cytoplasm. It localises to the cytoskeleton. It is found in the microtubule organizing center. The protein localises to the centrosome. The protein resides in the centriole. Functionally, interferon-stimulated protein that plays a role in innate immunity. The polypeptide is Coiled-coil domain-containing protein 92 (Ccdc92) (Mus musculus (Mouse)).